Here is a 574-residue protein sequence, read N- to C-terminus: Proline--tRNA ligase (574 aa).

It belongs to the class-II aminoacyl-tRNA synthetase family. ProS type 1 subfamily. In terms of assembly, homodimer.

The protein localises to the cytoplasm. It carries out the reaction tRNA(Pro) + L-proline + ATP = L-prolyl-tRNA(Pro) + AMP + diphosphate. Functionally, catalyzes the attachment of proline to tRNA(Pro) in a two-step reaction: proline is first activated by ATP to form Pro-AMP and then transferred to the acceptor end of tRNA(Pro). As ProRS can inadvertently accommodate and process non-cognate amino acids such as alanine and cysteine, to avoid such errors it has two additional distinct editing activities against alanine. One activity is designated as 'pretransfer' editing and involves the tRNA(Pro)-independent hydrolysis of activated Ala-AMP. The other activity is designated 'posttransfer' editing and involves deacylation of mischarged Ala-tRNA(Pro). The misacylated Cys-tRNA(Pro) is not edited by ProRS. This Buchnera aphidicola subsp. Baizongia pistaciae (strain Bp) protein is Proline--tRNA ligase.